The following is a 2193-amino-acid chain: Genome polyprotein (2193 aa).

Residue Gly2 is the site of N-myristoyl glycine; by host attachment. At 2–1503 (GAQVSTQKTG…HVSRAFICLQ (1502 aa)) the chain is on the cytoplasmic side. The segment at 565-582 (QLLQGDVEEAVNRAVARV) is amphipathic alpha-helix. Residues His880 and Asp898 each act as for protease 2A activity in the active site. The Zn(2+) site is built by Cys915 and Cys917. The For protease 2A activity role is filled by Cys969. Positions 975 and 977 each coordinate Zn(2+). The membrane-binding stretch occupies residues 1109 to 1181 (SNGWLKKFTE…EQSAPSQSDQ (73 aa)). Residues 1109 to 1247 (SNGWLKKFTE…SPGAGKSVAT (139 aa)) form an oligomerization region. Positions 1130-1134 (AIKIQ) are RNA-binding. Residues 1213 to 1369 (EKKMSNYIQF…SMYSQNGKIN (157 aa)) enclose the SF3 helicase domain. Zn(2+) contacts are provided by Cys1377, Cys1389, and Cys1394. A C4-type; degenerate zinc finger spans residues 1377 to 1394 (CDEECCPVNFKRCCPLVC). The RNA-binding stretch occupies residues 1421–1428 (EYNHRHSV). The oligomerization stretch occupies residues 1432–1437 (LEALFQ). An intramembrane segment occupies 1504–1519 (ALTTFVSVAGIIYIIY). Over 1520–2193 (KLFAGFQGAY…TLRRKWLDSF (674 aa)) the chain is Cytoplasmic. O-(5'-phospho-RNA)-tyrosine is present on Tyr1529. Positions 1549-1727 (GPAFEFAVAM…FSAALLRHYF (179 aa)) constitute a Peptidase C3 domain. Residues His1588, Glu1619, and Cys1695 each act as for protease 3C activity in the active site. The 117-residue stretch at 1958–2074 (GHLIAFDYSG…SYPWPIDASL (117 aa)) folds into the RdRp catalytic domain. 2 residues coordinate Mg(2+): Asp1964 and Asp2060.

It belongs to the picornaviruses polyprotein family. In terms of assembly, interacts with capsid protein VP1 and capsid protein VP3 to form heterotrimeric protomers. Interacts with capsid protein VP0, and capsid protein VP3 to form heterotrimeric protomers. Five protomers subsequently associate to form pentamers which serve as building blocks for the capsid. Interacts with capsid protein VP2, capsid protein VP3 and capsid protein VP4 following cleavage of capsid protein VP0. As to quaternary structure, interacts with capsid protein VP1 and capsid protein VP3 in the mature capsid. Interacts with host CD55; this interaction promotes virus attachment to the host cell and subsequent internalization. In terms of assembly, interacts with capsid protein VP0 and capsid protein VP1 to form heterotrimeric protomers. Five protomers subsequently associate to form pentamers which serve as building blocks for the capsid. Interacts with capsid protein VP4 in the mature capsid. Interacts with protein 2C; this interaction may be important for virion morphogenesis. Interacts with host CD55; this interaction promotes virus attachment to the host cell and subsequent internalization. Interacts with capsid protein VP1 and capsid protein VP3. As to quaternary structure, homodimer. In terms of assembly, homohexamer; forms a hexameric ring structure with 6-fold symmetry characteristic of AAA+ ATPases. Interacts (via N-terminus) with host RTN3 (via reticulon domain); this interaction is important for viral replication. Interacts with capsid protein VP3; this interaction may be important for virion morphogenesis. Interacts with protein 3CD. As to quaternary structure, homodimer. Interacts with host GBF1. Interacts (via GOLD domain) with host ACBD3 (via GOLD domain); this interaction allows the formation of a viral protein 3A/ACBD3 heterotetramer with a 2:2 stoichiometry, which will stimulate the recruitment of host PI4KB in order to synthesize PI4P at the viral RNA replication sites. In terms of assembly, interacts with RNA-directed RNA polymerase. Interacts with protein 3AB and with RNA-directed RNA polymerase. As to quaternary structure, interacts with Viral protein genome-linked and with protein 3CD. Mg(2+) serves as cofactor. Specific enzymatic cleavages in vivo by the viral proteases yield processing intermediates and the mature proteins. In terms of processing, myristoylation is required for the formation of pentamers during virus assembly. Further assembly of 12 pentamers and a molecule of genomic RNA generates the provirion. Post-translationally, during virion maturation, immature virions are rendered infectious following cleavage of VP0 into VP4 and VP2. This maturation seems to be an autocatalytic event triggered by the presence of RNA in the capsid and it is followed by a conformational change infectious virion. Myristoylation is required during RNA encapsidation and formation of the mature virus particle. In terms of processing, VPg is uridylylated by the polymerase into VPg-pUpU. This acts as a nucleotide-peptide primer for the genomic RNA replication.

The protein localises to the virion. The protein resides in the host cytoplasm. It localises to the host cytoplasmic vesicle membrane. Its subcellular location is the host nucleus. The catalysed reaction is a ribonucleoside 5'-triphosphate + H2O = a ribonucleoside 5'-diphosphate + phosphate + H(+). It catalyses the reaction Selective cleavage of Tyr-|-Gly bond in the picornavirus polyprotein.. It carries out the reaction RNA(n) + a ribonucleoside 5'-triphosphate = RNA(n+1) + diphosphate. The enzyme catalyses Selective cleavage of Gln-|-Gly bond in the poliovirus polyprotein. In other picornavirus reactions Glu may be substituted for Gln, and Ser or Thr for Gly.. With respect to regulation, replication or transcription is subject to high level of random mutations by the nucleotide analog ribavirin. In terms of biological role, forms an icosahedral capsid of pseudo T=3 symmetry with capsid proteins VP2 and VP3. The capsid is 300 Angstroms in diameter, composed of 60 copies of each capsid protein and enclosing the viral positive strand RNA genome. Capsid protein VP1 mainly forms the vertices of the capsid. Capsid protein VP1 interacts with host cell receptor to provide virion attachment to target host cells. This attachment induces virion internalization. Tyrosine kinases are probably involved in the entry process. After binding to its receptor, the capsid undergoes conformational changes. Capsid protein VP1 N-terminus (that contains an amphipathic alpha-helix) and capsid protein VP4 are externalized. Together, they shape a pore in the host membrane through which viral genome is translocated to host cell cytoplasm. Functionally, forms an icosahedral capsid of pseudo T=3 symmetry with capsid proteins VP2 and VP3. The capsid is 300 Angstroms in diameter, composed of 60 copies of each capsid protein and enclosing the viral positive strand RNA genome. Its function is as follows. Lies on the inner surface of the capsid shell. After binding to the host receptor, the capsid undergoes conformational changes. Capsid protein VP4 is released, Capsid protein VP1 N-terminus is externalized, and together, they shape a pore in the host membrane through which the viral genome is translocated into the host cell cytoplasm. Component of immature procapsids, which is cleaved into capsid proteins VP4 and VP2 after maturation. Allows the capsid to remain inactive before the maturation step. In terms of biological role, cysteine protease that cleaves viral polyprotein and specific host proteins. It is responsible for the autocatalytic cleavage between the P1 and P2 regions, which is the first cleavage occurring in the polyprotein. Also cleaves the host translation initiation factor EIF4G1, in order to shut down the capped cellular mRNA translation. Inhibits the host nucleus-cytoplasm protein and RNA trafficking by cleaving host members of the nuclear pores. Counteracts stress granule formation probably by antagonizing its assembly or promoting its dissassembly. Functionally, plays an essential role in the virus replication cycle by acting as a viroporin. Creates a pore in the host endoplasmic reticulum and as a consequence releases Ca2+ in the cytoplasm of infected cell. In turn, high levels of cytoplasmic calcium may trigger membrane trafficking and transport of viral ER-associated proteins to viroplasms, sites of viral genome replication. Its function is as follows. Induces and associates with structural rearrangements of intracellular membranes. Displays RNA-binding, nucleotide binding and NTPase activities. May play a role in virion morphogenesis and viral RNA encapsidation by interacting with the capsid protein VP3. Localizes the viral replication complex to the surface of membranous vesicles. Together with protein 3CD binds the Cis-Active RNA Element (CRE) which is involved in RNA synthesis initiation. Acts as a cofactor to stimulate the activity of 3D polymerase, maybe through a nucleid acid chaperone activity. In terms of biological role, localizes the viral replication complex to the surface of membranous vesicles. It inhibits host cell endoplasmic reticulum-to-Golgi apparatus transport and causes the disassembly of the Golgi complex, possibly through GBF1 interaction. This would result in depletion of MHC, trail receptors and IFN receptors at the host cell surface. Plays an essential role in viral RNA replication by recruiting ACBD3 and PI4KB at the viral replication sites, thereby allowing the formation of the rearranged membranous structures where viral replication takes place. Functionally, acts as a primer for viral RNA replication and remains covalently bound to viral genomic RNA. VPg is uridylylated prior to priming replication into VPg-pUpU. The oriI viral genomic sequence may act as a template for this. The VPg-pUpU is then used as primer on the genomic RNA poly(A) by the RNA-dependent RNA polymerase to replicate the viral genome. During genome replication, the VPg-RNA linkage is removed by the host TDP2, thereby accelerating replication. During the late stage of the replication cycle, host TDP2 is excluded from sites of viral RNA synthesis and encapsidation, allowing for the generation of progeny virions. Its function is as follows. Involved in the viral replication complex and viral polypeptide maturation. It exhibits protease activity with a specificity and catalytic efficiency that is different from protease 3C. Protein 3CD lacks polymerase activity. Protein 3CD binds to the 5'UTR of the viral genome. Replicates the viral genomic RNA on the surface of intracellular membranes. May form linear arrays of subunits that propagate along a strong head-to-tail interaction called interface-I. Covalently attaches UMP to a tyrosine of VPg, which is used to prime RNA synthesis. The positive stranded RNA genome is first replicated at virus induced membranous vesicles, creating a dsRNA genomic replication form. This dsRNA is then used as template to synthesize positive stranded RNA genomes. ss(+)RNA genomes are either translated, replicated or encapsidated. In terms of biological role, major viral protease that mediates proteolytic processing of the polyprotein. Cleaves host EIF5B, contributing to host translation shutoff. Also cleaves host PABPC1, contributing to host translation shutoff. Cleaves host NLRP1, triggers host N-glycine-mediated degradation of the autoinhibitory NLRP1 N-terminal fragment. This Echovirus 12 (strain Travis) protein is Genome polyprotein.